We begin with the raw amino-acid sequence, 1113 residues long: uncharacterized protein (1113 aa).

Residue 313 to 320 (GPPGTGKS) coordinates ATP.

The protein belongs to the DNA2/NAM7 helicase family.

This is an uncharacterized protein from Mycoplasma genitalium (strain ATCC 33530 / DSM 19775 / NCTC 10195 / G37) (Mycoplasmoides genitalium).